We begin with the raw amino-acid sequence, 1916 residues long: Telomere length regulator protein RIF1 (1916 aa).

Over residues Met-1–His-26 the composition is skewed to basic and acidic residues. Positions Met-1–Cys-71 are disordered. The segment covering Asp-27–Met-37 has biased composition (polar residues). Phosphoserine is present on Ser-97. Disordered regions lie at residues Pro-126–Arg-149, Pro-1314–Asp-1372, Arg-1441–His-1476, Glu-1606–Arg-1678, Glu-1789–Leu-1811, and Leu-1829–Glu-1854. Positions Ser-1324–Ala-1334 are enriched in low complexity. The segment covering Leu-1342 to Ser-1355 has biased composition (polar residues). The span at Pro-1615 to Lys-1625 shows a compositional bias: polar residues. Basic and acidic residues predominate over residues Gln-1626 to Leu-1635. Phosphoserine is present on residues Ser-1637 and Ser-1795. Residues Thr-1800 to Leu-1811 show a composition bias toward polar residues. A Phosphoserine modification is found at Ser-1852.

The protein belongs to the RIF1 family. Interacts with RAP1 (via C-terminus). Interacts with RIF2.

It localises to the nucleus. Its subcellular location is the chromosome. The protein resides in the telomere. Negatively regulates telomere length by preventing telomere elongation or promoting degradation of the telomere ends. Recruited to telomeres by interaction with the C-terminus of RAP1, which binds directly to telomeric repeat DNA. This may create a negative feedback loop in which the addition of new telomere repeats creates binding sites for inhibitors of telomere length extension. May also influence the balance of transcriptional silencing at telomeres and the silent mating type locus HMR, which is mediated by SIR (Silent Information Regulator) proteins including SIR3 and SIR4. RIF1 competes with SIR proteins for binding to the C-terminus of RAP1. In the absence of RIF1, a limiting cellular pool of SIR proteins may preferentially associate with RAP1 at sub-telomeric loci, causing enhanced telomeric silencing and attenuated silencing of the HMR locus. The polypeptide is Telomere length regulator protein RIF1 (RIF1) (Saccharomyces cerevisiae (strain ATCC 204508 / S288c) (Baker's yeast)).